The chain runs to 117 residues: Putative phosphotransferase enzyme IIB component MPN_268 (117 aa).

Residues 1-21 (MKVLLWIGYVLSFGLLYLYLV) traverse the membrane as a helical segment. The PTS EIIB type-1 domain maps to 42–117 (PFAVRDFIAA…QLKQQIENER (76 aa)).

It localises to the membrane. Functionally, the phosphoenolpyruvate-dependent sugar phosphotransferase system (PTS), a major carbohydrate active -transport system, catalyzes the phosphorylation of incoming sugar substrates concomitant with their translocation across the cell membrane. This is Putative phosphotransferase enzyme IIB component MPN_268 from Mycoplasma pneumoniae (strain ATCC 29342 / M129 / Subtype 1) (Mycoplasmoides pneumoniae).